A 791-amino-acid chain; its full sequence is Phenylalanine--tRNA ligase beta subunit (791 aa).

A tRNA-binding domain is found at 39 to 147 (GDALGQVVVA…DDAPVGQALA (109 aa)). The B5 domain maps to 400-475 (PQPASILLRR…RIHGYDRVPT (76 aa)). The Mg(2+) site is built by aspartate 453, aspartate 459, glutamate 462, and glutamate 463. Residues 697–790 (SRYPSMRRDL…IEREHRARIR (94 aa)) form the FDX-ACB domain.

It belongs to the phenylalanyl-tRNA synthetase beta subunit family. Type 1 subfamily. As to quaternary structure, tetramer of two alpha and two beta subunits. Mg(2+) serves as cofactor.

The protein localises to the cytoplasm. It catalyses the reaction tRNA(Phe) + L-phenylalanine + ATP = L-phenylalanyl-tRNA(Phe) + AMP + diphosphate + H(+). The polypeptide is Phenylalanine--tRNA ligase beta subunit (Xanthomonas campestris pv. campestris (strain 8004)).